The sequence spans 172 residues: 3-hydroxydecanoyl-[acyl-carrier-protein] dehydratase (172 aa).

H70 is a catalytic residue.

The protein belongs to the thioester dehydratase family. FabA subfamily. In terms of assembly, homodimer.

The protein localises to the cytoplasm. The enzyme catalyses a (3R)-hydroxyacyl-[ACP] = a (2E)-enoyl-[ACP] + H2O. It carries out the reaction (3R)-hydroxydecanoyl-[ACP] = (2E)-decenoyl-[ACP] + H2O. The catalysed reaction is (2E)-decenoyl-[ACP] = (3Z)-decenoyl-[ACP]. It functions in the pathway lipid metabolism; fatty acid biosynthesis. Its function is as follows. Necessary for the introduction of cis unsaturation into fatty acids. Catalyzes the dehydration of (3R)-3-hydroxydecanoyl-ACP to E-(2)-decenoyl-ACP and then its isomerization to Z-(3)-decenoyl-ACP. Can catalyze the dehydratase reaction for beta-hydroxyacyl-ACPs with saturated chain lengths up to 16:0, being most active on intermediate chain length. This chain is 3-hydroxydecanoyl-[acyl-carrier-protein] dehydratase, found in Xylella fastidiosa (strain M23).